The primary structure comprises 219 residues: Maleylacetoacetate isomerase (219 aa).

In terms of domain architecture, GST N-terminal spans 4–87 (NKTVLYSYWR…YLEETHPENP (84 aa)). Residues 14–19 (SSCSWR), Gln-45, 71–72 (QS), Gln-111, and 115–117 (NLK) each bind glutathione. The region spanning 92-217 (GSYERAIARQ…LPQNQPDAEP (126 aa)) is the GST C-terminal domain.

Belongs to the GST superfamily. Zeta family. Requires glutathione as cofactor.

It catalyses the reaction 4-maleylacetoacetate = 4-fumarylacetoacetate. It participates in amino-acid degradation; L-phenylalanine degradation; acetoacetate and fumarate from L-phenylalanine: step 5/6. The polypeptide is Maleylacetoacetate isomerase (mai) (Dictyostelium discoideum (Social amoeba)).